A 278-amino-acid polypeptide reads, in one-letter code: Diaminopimelate epimerase (278 aa).

Positions 11 and 75 each coordinate substrate. Catalysis depends on cysteine 84, which acts as the Proton donor. Substrate contacts are provided by residues 85–86 (GN), asparagine 160, asparagine 195, and 213–214 (ER). Catalysis depends on cysteine 222, which acts as the Proton acceptor. 223 to 224 (GT) serves as a coordination point for substrate.

Belongs to the diaminopimelate epimerase family. In terms of assembly, homodimer.

The protein resides in the cytoplasm. It catalyses the reaction (2S,6S)-2,6-diaminopimelate = meso-2,6-diaminopimelate. The protein operates within amino-acid biosynthesis; L-lysine biosynthesis via DAP pathway; DL-2,6-diaminopimelate from LL-2,6-diaminopimelate: step 1/1. Its function is as follows. Catalyzes the stereoinversion of LL-2,6-diaminopimelate (L,L-DAP) to meso-diaminopimelate (meso-DAP), a precursor of L-lysine and an essential component of the bacterial peptidoglycan. The sequence is that of Diaminopimelate epimerase from Corynebacterium aurimucosum (strain ATCC 700975 / DSM 44827 / CIP 107346 / CN-1) (Corynebacterium nigricans).